A 491-amino-acid chain; its full sequence is Glutamate--tRNA ligase (491 aa).

The short motif at 12-22 (PSPTGTPHVGL) is the 'HIGH' region element. The interval 111 to 134 (STPEEVEERHKAAGRDPKLGYDNF) is disordered. Over residues 117 to 134 (EERHKAAGRDPKLGYDNF) the composition is skewed to basic and acidic residues. Residues 256-260 (KLSKR) carry the 'KMSKS' region motif. Residue lysine 259 coordinates ATP.

Belongs to the class-I aminoacyl-tRNA synthetase family. Glutamate--tRNA ligase type 1 subfamily. Monomer.

The protein resides in the cytoplasm. It catalyses the reaction tRNA(Glu) + L-glutamate + ATP = L-glutamyl-tRNA(Glu) + AMP + diphosphate. Catalyzes the attachment of glutamate to tRNA(Glu) in a two-step reaction: glutamate is first activated by ATP to form Glu-AMP and then transferred to the acceptor end of tRNA(Glu). The chain is Glutamate--tRNA ligase from Rhodococcus jostii (strain RHA1).